Consider the following 145-residue polypeptide: 3-hydroxyacyl-[acyl-carrier-protein] dehydratase FabZ (145 aa).

Residue histidine 47 is part of the active site.

The protein belongs to the thioester dehydratase family. FabZ subfamily.

It is found in the cytoplasm. It carries out the reaction a (3R)-hydroxyacyl-[ACP] = a (2E)-enoyl-[ACP] + H2O. In terms of biological role, involved in unsaturated fatty acids biosynthesis. Catalyzes the dehydration of short chain beta-hydroxyacyl-ACPs and long chain saturated and unsaturated beta-hydroxyacyl-ACPs. This chain is 3-hydroxyacyl-[acyl-carrier-protein] dehydratase FabZ, found in Thiobacillus denitrificans (strain ATCC 25259 / T1).